A 263-amino-acid chain; its full sequence is Phosphonoacetaldehyde hydrolase (263 aa).

Catalysis depends on D10, which acts as the Nucleophile. Positions 10 and 12 each coordinate Mg(2+). K51 functions as the Schiff-base intermediate with substrate in the catalytic mechanism. D184 serves as a coordination point for Mg(2+).

Belongs to the HAD-like hydrolase superfamily. PhnX family. In terms of assembly, homodimer. It depends on Mg(2+) as a cofactor.

The enzyme catalyses phosphonoacetaldehyde + H2O = acetaldehyde + phosphate + H(+). Functionally, involved in phosphonate degradation. The protein is Phosphonoacetaldehyde hydrolase of Bacteroides fragilis (strain ATCC 25285 / DSM 2151 / CCUG 4856 / JCM 11019 / LMG 10263 / NCTC 9343 / Onslow / VPI 2553 / EN-2).